The primary structure comprises 451 residues: GTPase Der (451 aa).

EngA-type G domains are found at residues 5–170 (PVVA…VEPE) and 186–359 (IKLA…AAAF). Residues 11–18 (GRPNVGKS), 58–62 (DTGGF), 122–125 (NKAE), 192–199 (GRPNVGKS), 239–243 (DTAGL), and 304–307 (NKWD) contribute to the GTP site. The KH-like domain occupies 360–444 (AKLSTPKLTR…PLRIEFKSSR (85 aa)).

Belongs to the TRAFAC class TrmE-Era-EngA-EngB-Septin-like GTPase superfamily. EngA (Der) GTPase family. In terms of assembly, associates with the 50S ribosomal subunit.

Its function is as follows. GTPase that plays an essential role in the late steps of ribosome biogenesis. The protein is GTPase Der of Bordetella petrii (strain ATCC BAA-461 / DSM 12804 / CCUG 43448).